We begin with the raw amino-acid sequence, 569 residues long: MSIDFRNLNTLWGSILVETLARLGLKIGVVSPGSRSTPLTIALARHPQIEAIPILDERSAAFFALGLAKQLYQPVVLVCTSGTATANFYPAVIEAKESHVPLLILTADRPPELRHAHAGQTIDQVKLYGNYPNWQAEISCPSANIERLRYLRQTIIHAWWRCLDPVPGVVHLNLPFRDPLAPTPDLEINNLEANFDQEAFFSHISRQNIAINHSILQINSLPSKGIIIAGLASPQNPESYCQAIADLARSQQYPILAEALSPLRNYAGLNPHLITTYDLLLRNPALRTQLTPDVVLQIGELPTSKELRTWLEEIDCPRWIIDPHPDNYDPLQGKTGHLRVNIEQLGDLFPDKTDNNREYRQLWQKFDQQARLTIDRLLAAETKLIEGKIPWLLSQYLPPRTPIFISNSMPVRYAEFFNPPSDRQIRPYFNRGANGIDGNLSTAIGIAYKNVPSLLLTGDLALLHDTNGFLIKKYFVGSLTIILINNKGGGIFQMLPIAKFDPPFEEFFATPQNIDFCQLCRTYGIDYHLISDWTDFEQKIAVLPESGIRLLEISCDRAFNTQWFLSNYV.

This sequence belongs to the TPP enzyme family. MenD subfamily. Homodimer. Mg(2+) serves as cofactor. The cofactor is Mn(2+). It depends on thiamine diphosphate as a cofactor.

It catalyses the reaction isochorismate + 2-oxoglutarate + H(+) = 5-enolpyruvoyl-6-hydroxy-2-succinyl-cyclohex-3-ene-1-carboxylate + CO2. It participates in quinol/quinone metabolism; 1,4-dihydroxy-2-naphthoate biosynthesis; 1,4-dihydroxy-2-naphthoate from chorismate: step 2/7. Its pathway is cofactor biosynthesis; phylloquinone biosynthesis. Catalyzes the thiamine diphosphate-dependent decarboxylation of 2-oxoglutarate and the subsequent addition of the resulting succinic semialdehyde-thiamine pyrophosphate anion to isochorismate to yield 2-succinyl-5-enolpyruvyl-6-hydroxy-3-cyclohexene-1-carboxylate (SEPHCHC). This is 2-succinyl-5-enolpyruvyl-6-hydroxy-3-cyclohexene-1-carboxylate synthase from Microcystis aeruginosa (strain NIES-843 / IAM M-2473).